The chain runs to 226 residues: ATP synthase F(0) complex subunit a (226 aa).

Helical transmembrane passes span 6-26 (FASFAAPTILGLPAAVLIILF), 68-88 (WSLMLVSLIIFIATTNLLGLL), 97-117 (QLSMNLAMAIPLWAGTVVMGF), 138-158 (IPMLIIIETISLFIQPMALAV), 164-184 (ITAGHLLMHLIGSATLALSTI), and 189-209 (TLIIFTILILLTVLEIAVALI).

This sequence belongs to the ATPase A chain family. Component of the ATP synthase complex composed at least of ATP5F1A/subunit alpha, ATP5F1B/subunit beta, ATP5MC1/subunit c (homooctomer), MT-ATP6/subunit a, MT-ATP8/subunit 8, ATP5ME/subunit e, ATP5MF/subunit f, ATP5MG/subunit g, ATP5MK/subunit k, ATP5MJ/subunit j, ATP5F1C/subunit gamma, ATP5F1D/subunit delta, ATP5F1E/subunit epsilon, ATP5PF/subunit F6, ATP5PB/subunit b, ATP5PD/subunit d, ATP5PO/subunit OSCP. ATP synthase complex consists of a soluble F(1) head domain (subunits alpha(3) and beta(3)) - the catalytic core - and a membrane F(0) domain - the membrane proton channel (subunits c, a, 8, e, f, g, k and j). These two domains are linked by a central stalk (subunits gamma, delta, and epsilon) rotating inside the F1 region and a stationary peripheral stalk (subunits F6, b, d, and OSCP). Interacts with DNAJC30; interaction is direct.

The protein resides in the mitochondrion inner membrane. The enzyme catalyses H(+)(in) = H(+)(out). Its function is as follows. Subunit a, of the mitochondrial membrane ATP synthase complex (F(1)F(0) ATP synthase or Complex V) that produces ATP from ADP in the presence of a proton gradient across the membrane which is generated by electron transport complexes of the respiratory chain. ATP synthase complex consist of a soluble F(1) head domain - the catalytic core - and a membrane F(1) domain - the membrane proton channel. These two domains are linked by a central stalk rotating inside the F(1) region and a stationary peripheral stalk. During catalysis, ATP synthesis in the catalytic domain of F(1) is coupled via a rotary mechanism of the central stalk subunits to proton translocation. With the subunit c (ATP5MC1), forms the proton-conducting channel in the F(0) domain, that contains two crucial half-channels (inlet and outlet) that facilitate proton movement from the mitochondrial intermembrane space (IMS) into the matrix. Protons are taken up via the inlet half-channel and released through the outlet half-channel, following a Grotthuss mechanism. The chain is ATP synthase F(0) complex subunit a from Pan paniscus (Pygmy chimpanzee).